Consider the following 190-residue polypeptide: Imidazoleglycerol-phosphate dehydratase (190 aa).

It belongs to the imidazoleglycerol-phosphate dehydratase family.

It is found in the cytoplasm. It catalyses the reaction D-erythro-1-(imidazol-4-yl)glycerol 3-phosphate = 3-(imidazol-4-yl)-2-oxopropyl phosphate + H2O. Its pathway is amino-acid biosynthesis; L-histidine biosynthesis; L-histidine from 5-phospho-alpha-D-ribose 1-diphosphate: step 6/9. This chain is Imidazoleglycerol-phosphate dehydratase, found in Methanococcus vannielii (strain ATCC 35089 / DSM 1224 / JCM 13029 / OCM 148 / SB).